The chain runs to 90 residues: uncharacterized protein (90 aa).

A signal peptide spans 1–20 (MAYKMLQVVLCSTLLIGALG).

This is an uncharacterized protein from Homo sapiens (Human).